Consider the following 188-residue polypeptide: Threonylcarbamoyl-AMP synthase (188 aa).

The YrdC-like domain occupies 3–188 (QLHPSDIKDI…RSGKILRNGQ (186 aa)).

It belongs to the SUA5 family. TsaC subfamily.

It localises to the cytoplasm. It carries out the reaction L-threonine + hydrogencarbonate + ATP = L-threonylcarbamoyladenylate + diphosphate + H2O. Its function is as follows. Required for the formation of a threonylcarbamoyl group on adenosine at position 37 (t(6)A37) in tRNAs that read codons beginning with adenine. Catalyzes the conversion of L-threonine, HCO(3)(-)/CO(2) and ATP to give threonylcarbamoyl-AMP (TC-AMP) as the acyladenylate intermediate, with the release of diphosphate. This chain is Threonylcarbamoyl-AMP synthase, found in Shewanella baltica (strain OS155 / ATCC BAA-1091).